Reading from the N-terminus, the 278-residue chain is Protein saf1 (278 aa).

Disordered regions lie at residues 1–43, 81–210, and 240–264; these read MLSK…RNMS, KKNI…DIEE, and QKLA…EDKD. Basic and acidic residues-rich tracts occupy residues 22–38 and 90–103; these read QIKV…ERLS and GRVE…AERQ. Basic residues-rich tracts occupy residues 104 to 116 and 169 to 183; these read HKPR…KNPK and REKK…HHKK. The span at 186-202 shows a compositional bias: polar residues; that stretch reads INASSAQPKSTTTTEAA.

The protein resides in the nucleus. It is found in the nucleolus. The sequence is that of Protein saf1 (saf1) from Schizosaccharomyces pombe (strain 972 / ATCC 24843) (Fission yeast).